Consider the following 432-residue polypeptide: MSKIVKIIGREIIDSRGNPTVEAEVHLEGGFVGMAAAPSGASTGSREALELRDGDKSRFLGKGVTKAVAAVNGPIAQALIGKDAKDQAGIDKIMIDLDGTENKSKFGANAILAVSLANAKAAAADKGMPLYEHIAELNGTPGKYSMPVPMMNIINGGEHADNNVDIQEFMIQPVGAKTVKEAIRMGSEVFHHLAKVLKAKGMNTAVGDEGGYAPNLGSNAEALAVIAEAVKAAGYELGKDITLAMDCAASEFYKDGKYVLAGEGNKAFTSEEFTHFLEELTKQYPIVSIEDGLDESDWDGFAYQTKVLGDKIQLVGDDLFVTNTKILKEGIEKGIANSILIKFNQIGSLTETLAAIKMAKDAGYTAVISHRSGETEDATIADLAVGTAAGQIKTGSMSRSDRVAKYNQLIRIEEALGEKAPYNGRKEIKGQA.

Gln167 contributes to the (2R)-2-phosphoglycerate binding site. Glu209 serves as the catalytic Proton donor. Asp246, Glu290, and Asp317 together coordinate Mg(2+). (2R)-2-phosphoglycerate-binding residues include Lys342, Arg371, Ser372, and Lys393. Residue Lys342 is the Proton acceptor of the active site.

The protein belongs to the enolase family. In terms of assembly, component of the RNA degradosome, a multiprotein complex involved in RNA processing and mRNA degradation. The cofactor is Mg(2+).

It localises to the cytoplasm. Its subcellular location is the secreted. The protein resides in the cell surface. The catalysed reaction is (2R)-2-phosphoglycerate = phosphoenolpyruvate + H2O. It participates in carbohydrate degradation; glycolysis; pyruvate from D-glyceraldehyde 3-phosphate: step 4/5. Catalyzes the reversible conversion of 2-phosphoglycerate (2-PG) into phosphoenolpyruvate (PEP). It is essential for the degradation of carbohydrates via glycolysis. The chain is Enolase from Shigella sonnei (strain Ss046).